The chain runs to 271 residues: Acetyl-coenzyme A carboxylase carboxyl transferase subunit beta (271 aa).

The CoA carboxyltransferase N-terminal domain occupies 21 to 271 (LWIQCPYCKQ…LGDLLALHTA (251 aa)). Zn(2+) is bound by residues Cys25, Cys28, Cys43, and Cys46. Residues 25–46 (CPYCKQGSYRESLGNAQVCPHC) form a C4-type zinc finger.

The protein belongs to the AccD/PCCB family. As to quaternary structure, acetyl-CoA carboxylase is a heterohexamer composed of biotin carboxyl carrier protein (AccB), biotin carboxylase (AccC) and two subunits each of ACCase subunit alpha (AccA) and ACCase subunit beta (AccD). Zn(2+) serves as cofactor.

The protein localises to the cytoplasm. The enzyme catalyses N(6)-carboxybiotinyl-L-lysyl-[protein] + acetyl-CoA = N(6)-biotinyl-L-lysyl-[protein] + malonyl-CoA. Its pathway is lipid metabolism; malonyl-CoA biosynthesis; malonyl-CoA from acetyl-CoA: step 1/1. In terms of biological role, component of the acetyl coenzyme A carboxylase (ACC) complex. Biotin carboxylase (BC) catalyzes the carboxylation of biotin on its carrier protein (BCCP) and then the CO(2) group is transferred by the transcarboxylase to acetyl-CoA to form malonyl-CoA. The sequence is that of Acetyl-coenzyme A carboxylase carboxyl transferase subunit beta from Lacticaseibacillus paracasei (strain ATCC 334 / BCRC 17002 / CCUG 31169 / CIP 107868 / KCTC 3260 / NRRL B-441) (Lactobacillus paracasei).